Here is a 27-residue protein sequence, read N- to C-terminus: uncharacterized protein (27 aa).

The protein localises to the mitochondrion. This is an uncharacterized protein from Emericella nidulans (Aspergillus nidulans).